A 228-amino-acid polypeptide reads, in one-letter code: L-ribulose-5-phosphate 4-epimerase UlaF (228 aa).

Residues 26–27 (GN), 43–44 (SG), and 72–73 (SS) each bind substrate. Zn(2+) is bound by residues aspartate 74, histidine 93, and histidine 95. Aspartate 118 acts as the Proton donor/acceptor in catalysis. Histidine 167 is a binding site for Zn(2+). Tyrosine 225 acts as the Proton donor/acceptor in catalysis.

This sequence belongs to the aldolase class II family. AraD/FucA subfamily. Requires Zn(2+) as cofactor.

The catalysed reaction is L-ribulose 5-phosphate = D-xylulose 5-phosphate. It participates in cofactor degradation; L-ascorbate degradation; D-xylulose 5-phosphate from L-ascorbate: step 4/4. In terms of biological role, catalyzes the isomerization of L-ribulose 5-phosphate to D-xylulose 5-phosphate. Is involved in the anaerobic L-ascorbate utilization. The sequence is that of L-ribulose-5-phosphate 4-epimerase UlaF from Shigella sonnei (strain Ss046).